Consider the following 396-residue polypeptide: Elongation factor Tu (396 aa).

The tr-type G domain occupies 10–206 (KLHVNVGTIG…ALDTHIPNPE (197 aa)). Residues 19-26 (GHVDHGKT) form a G1 region. Position 19–26 (19–26 (GHVDHGKT)) interacts with GTP. Residue T26 coordinates Mg(2+). The segment at 60–64 (GITIS) is G2. The segment at 81–84 (DCPG) is G3. Residues 81–85 (DCPGH) and 136–139 (NKAD) contribute to the GTP site. Residues 136–139 (NKAD) are G4. The tract at residues 174-176 (SAL) is G5.

It belongs to the TRAFAC class translation factor GTPase superfamily. Classic translation factor GTPase family. EF-Tu/EF-1A subfamily. As to quaternary structure, monomer.

The protein localises to the cytoplasm. It carries out the reaction GTP + H2O = GDP + phosphate + H(+). GTP hydrolase that promotes the GTP-dependent binding of aminoacyl-tRNA to the A-site of ribosomes during protein biosynthesis. This Xylella fastidiosa (strain 9a5c) protein is Elongation factor Tu.